A 149-amino-acid polypeptide reads, in one-letter code: Deoxyuridine 5'-triphosphate nucleotidohydrolase (149 aa).

Substrate is bound by residues 68–70 (RSG), asparagine 81, 85–87 (LID), and methionine 95.

This sequence belongs to the dUTPase family. It depends on Mg(2+) as a cofactor.

It catalyses the reaction dUTP + H2O = dUMP + diphosphate + H(+). It functions in the pathway pyrimidine metabolism; dUMP biosynthesis; dUMP from dCTP (dUTP route): step 2/2. This enzyme is involved in nucleotide metabolism: it produces dUMP, the immediate precursor of thymidine nucleotides and it decreases the intracellular concentration of dUTP so that uracil cannot be incorporated into DNA. This chain is Deoxyuridine 5'-triphosphate nucleotidohydrolase, found in Methylibium petroleiphilum (strain ATCC BAA-1232 / LMG 22953 / PM1).